The sequence spans 439 residues: Protein ABHD8 (439 aa).

2 disordered regions span residues 49–70 (AGPA…AAQG) and 124–156 (PAGS…RPKR). The span at 136–145 (AGSGSGSGSG) shows a compositional bias: gly residues. Residues 146-156 (GRRRRARRPKR) are compositionally biased toward basic residues. Positions 177 to 279 (VLFFIHGVGG…HKVIMINGGG (103 aa)) constitute an AB hydrolase-1 domain. Residues Ser252, Asp370, and His398 each act as charge relay system in the active site.

This sequence belongs to the AB hydrolase superfamily. As to quaternary structure, interacts with NLRP3 (via NACHT and LLR domains); this interaction is enhanced in the presence of NLRP3 inflammasome inducers, such as ATP, nigericin, silica, or alum. Interacts with ZDHHC12. In terms of assembly, (Microbial infection) Interacts with SARS-CoV-2 nucleoprotein N; this interaction disrupts the NLRP3-ABHD8 association, enhancing NLRP3 stability, ultimately leading to increased inflammasome activation.

It localises to the cytoplasm. Functionally, negatively regulates NLRP3-driven inflammation. Promotes NLRP3 degradation through the chaperone-mediated autophagy (CMA) pathway, hence attenuating inflammasome activation and IL1B secretion. Acts by recruiting palmitoyltransferase ZDHHC12 to NLRP3, facilitating NLRP3 palmitoylation and subsequent degradation. In Homo sapiens (Human), this protein is Protein ABHD8.